The following is a 461-amino-acid chain: Cysteine--tRNA ligase (461 aa).

Cysteine 28 contacts Zn(2+). Positions 30–40 match the 'HIGH' region motif; sequence ITVYDLCHIGH. Positions 209, 234, and 238 each coordinate Zn(2+). A 'KMSKS' region motif is present at residues 266–270; that stretch reads KMSKS. ATP is bound at residue lysine 269.

It belongs to the class-I aminoacyl-tRNA synthetase family. As to quaternary structure, monomer. It depends on Zn(2+) as a cofactor.

It is found in the cytoplasm. The catalysed reaction is tRNA(Cys) + L-cysteine + ATP = L-cysteinyl-tRNA(Cys) + AMP + diphosphate. The protein is Cysteine--tRNA ligase of Escherichia coli (strain SMS-3-5 / SECEC).